Consider the following 132-residue polypeptide: Glycine cleavage system H protein (132 aa).

Residues 24–106 (LVRIGISAFA…HGEGWLLVVR (83 aa)) form the Lipoyl-binding domain. An N6-lipoyllysine modification is found at Lys-65.

The protein belongs to the GcvH family. The glycine cleavage system is composed of four proteins: P, T, L and H. It depends on (R)-lipoate as a cofactor.

Its function is as follows. The glycine cleavage system catalyzes the degradation of glycine. The H protein shuttles the methylamine group of glycine from the P protein to the T protein. The sequence is that of Glycine cleavage system H protein from Prochlorococcus marinus (strain MIT 9313).